Here is a 795-residue protein sequence, read N- to C-terminus: Mitochondrial intermediate peptidase (795 aa).

The N-terminal 22 residues, 1-22, are a transit peptide targeting the mitochondrion; it reads MLKTLNRRSWTCRQCIRILRRN. Position 561 (His561) interacts with Zn(2+). The active site involves Glu562. 2 residues coordinate Zn(2+): His565 and His568.

It belongs to the peptidase M3 family. Requires Zn(2+) as cofactor.

The protein localises to the mitochondrion matrix. It carries out the reaction Release of an N-terminal octapeptide as second stage of processing of some proteins imported into the mitochondrion.. Functionally, cleaves proteins, imported into the mitochondrion, to their mature size. While most mitochondrial precursor proteins are processed to the mature form in one step by mitochondrial processing peptidase (MPP), the sequential cleavage by MIP of an octapeptide after initial processing by MPP is a required step for a subgroup of nuclear-encoded precursor proteins destined for the matrix or the inner membrane. The polypeptide is Mitochondrial intermediate peptidase (OCT1) (Coccidioides immitis (strain RS) (Valley fever fungus)).